The chain runs to 254 residues: Fasciclin-like arabinogalactan protein 7 (254 aa).

A signal peptide spans 1–22 (MAKMQLSIFIAVVALIVCSASA). Positions 44–186 (NVNLTELLSV…VAVYQVNRVL (143 aa)) constitute an FAS1 domain. N-linked (GlcNAc...) asparagine glycosylation is found at Asn-46, Asn-78, Asn-104, and Asn-130. The interval 203–233 (APAPIVSAPSDSPSVADSEGASSPKSSHKNS) is disordered. Over residues 206–220 (PIVSAPSDSPSVADS) the composition is skewed to low complexity. Over residues 222–233 (GASSPKSSHKNS) the composition is skewed to polar residues. Asn-232 is lipidated: GPI-anchor amidated asparagine. Residues 233 to 254 (SGQKLLLAPISMVISGLVALFL) constitute a propeptide, removed in mature form.

Belongs to the fasciclin-like AGP family.

The protein localises to the cell membrane. Its function is as follows. May be a cell surface adhesion protein. This Arabidopsis thaliana (Mouse-ear cress) protein is Fasciclin-like arabinogalactan protein 7 (FLA7).